A 212-amino-acid polypeptide reads, in one-letter code: 3,4-dihydroxy-2-butanone 4-phosphate synthase (212 aa).

Residues 37–38, Asp42, 150–154, and Glu174 contribute to the D-ribulose 5-phosphate site; these read RE and RRGHT. Mg(2+) is bound at residue Glu38. His153 lines the Mg(2+) pocket.

It belongs to the DHBP synthase family. Homodimer. Mg(2+) is required as a cofactor. The cofactor is Mn(2+).

It carries out the reaction D-ribulose 5-phosphate = (2S)-2-hydroxy-3-oxobutyl phosphate + formate + H(+). It participates in cofactor biosynthesis; riboflavin biosynthesis; 2-hydroxy-3-oxobutyl phosphate from D-ribulose 5-phosphate: step 1/1. In terms of biological role, catalyzes the conversion of D-ribulose 5-phosphate to formate and 3,4-dihydroxy-2-butanone 4-phosphate. The sequence is that of 3,4-dihydroxy-2-butanone 4-phosphate synthase from Shewanella piezotolerans (strain WP3 / JCM 13877).